The primary structure comprises 263 residues: Hydroxyethylthiazole kinase (263 aa).

A substrate-binding site is contributed by Met-39. ATP is bound by residues Lys-115 and Thr-160. Gly-187 is a binding site for substrate.

Belongs to the Thz kinase family. Mg(2+) serves as cofactor.

The catalysed reaction is 5-(2-hydroxyethyl)-4-methylthiazole + ATP = 4-methyl-5-(2-phosphooxyethyl)-thiazole + ADP + H(+). The protein operates within cofactor biosynthesis; thiamine diphosphate biosynthesis; 4-methyl-5-(2-phosphoethyl)-thiazole from 5-(2-hydroxyethyl)-4-methylthiazole: step 1/1. Its function is as follows. Catalyzes the phosphorylation of the hydroxyl group of 4-methyl-5-beta-hydroxyethylthiazole (THZ). This Staphylococcus aureus (strain COL) protein is Hydroxyethylthiazole kinase.